The primary structure comprises 519 residues: Nif-specific regulatory protein (519 aa).

The Sigma-54 factor interaction domain occupies 177 to 405; it reads IVGESPALKR…LDNCVQRTAT (229 aa). Residues 205-212 and 268-277 contribute to the ATP site; these read GESGTGKE and ANGGTLLLDE. The tract at residues 406–476 is inter-domain linker; sequence LASSNTITSS…ATIEAAGLTE (71 aa). The a divalent metal cation site is built by Cys419 and Cys424. The interval 477–519 is C-terminal DNA-binding domain; the sequence is RDRLIKAMERAGWVQAKAARILGKTPRQVGYALRRHRIDVKKE. A DNA-binding region (H-T-H motif) is located at residues 491-510; the sequence is QAKAARILGKTPRQVGYALR.

Interacts with sigma-54.

Required for activation of most nif operons, which are directly involved in nitrogen fixation. The polypeptide is Nif-specific regulatory protein (nifA) (Rhizobium leguminosarum).